The following is a 670-amino-acid chain: Protein HBS1 (670 aa).

Disordered stretches follow at residues 60–88 (KDIQEEEADEDEDEDAAFAKARRDSESFQ) and 164–202 (KTVSKTVPTPPPKISLKEPRRGFEIPSPKVPSSPVVSGR). Residues 63 to 75 (QEEEADEDEDEDA) are compositionally biased toward acidic residues. Low complexity predominate over residues 189–200 (PSPKVPSSPVVS). The tr-type G domain occupies 245–468 (KSHIHMIVIG…DVIENFKIPE (224 aa)). The segment at 254 to 261 (GHVDAGKS) is G1. 254–261 (GHVDAGKS) provides a ligand contact to GTP. Residues 310-314 (GITMD) form a G2 region. Positions 331–334 (DAPG) are G3. Residues 393 to 396 (NKLD) and 432 to 434 (SGL) each bind GTP. Residues 393–396 (NKLD) are G4. The interval 432–434 (SGL) is G5.

This sequence belongs to the TRAFAC class translation factor GTPase superfamily. Classic translation factor GTPase family. As to quaternary structure, component of the Pelota-HBS1L complex, also named Dom34-Hbs1 complex, composed of pelo and HBS1. As to expression, expressed in ovaries (at protein level).

The protein localises to the cytoplasm. The enzyme catalyses GTP + H2O = GDP + phosphate + H(+). GTPase component of the Pelota-HBS1L complex, a complex that recognizes stalled ribosomes and triggers the No-Go Decay (NGD) pathway. The Pelota-HBS1L complex recognizes ribosomes stalled at the 3' end of an mRNA and engages stalled ribosomes by destabilizing mRNA in the mRNA channel. Following ribosome-binding, the Pelota-HBS1L complex promotes recruitment of pix, which drives the disassembly of stalled ribosomes, followed by degradation of damaged mRNAs as part of the NGD pathway. Together with pelo, required for transposon silencing in the ovary and testis. Together with pelo, promotes meiosis and spermatid individualization during spermatogenesis. This Drosophila melanogaster (Fruit fly) protein is Protein HBS1.